A 174-amino-acid chain; its full sequence is Peroxisome assembly protein 22 (174 aa).

Residues 9-27 traverse the membrane as a helical segment; the sequence is GYLAIIAAVSIGAAAYLWW.

It belongs to the peroxin-22 family.

Its subcellular location is the peroxisome membrane. In terms of biological role, involved in peroxisome biogenesis. This Candida glabrata (strain ATCC 2001 / BCRC 20586 / JCM 3761 / NBRC 0622 / NRRL Y-65 / CBS 138) (Yeast) protein is Peroxisome assembly protein 22 (PEX22).